Reading from the N-terminus, the 338-residue chain is Ketol-acid reductoisomerase (NADP(+)) (338 aa).

A KARI N-terminal Rossmann domain is found at 1 to 181 (MKVFYDKDAD…GGGRAGIIET (181 aa)). Residues 24 to 27 (YGSQ), Arg47, and Ser52 each bind NADP(+). His107 is an active-site residue. Residue Gly133 coordinates NADP(+). Residues 182–327 (NFREETETDL…AKLRAMMPWI (146 aa)) form the KARI C-terminal knotted domain. Positions 190, 194, 226, and 230 each coordinate Mg(2+). Ser251 is a binding site for substrate.

Belongs to the ketol-acid reductoisomerase family. The cofactor is Mg(2+).

The catalysed reaction is (2R)-2,3-dihydroxy-3-methylbutanoate + NADP(+) = (2S)-2-acetolactate + NADPH + H(+). The enzyme catalyses (2R,3R)-2,3-dihydroxy-3-methylpentanoate + NADP(+) = (S)-2-ethyl-2-hydroxy-3-oxobutanoate + NADPH + H(+). It functions in the pathway amino-acid biosynthesis; L-isoleucine biosynthesis; L-isoleucine from 2-oxobutanoate: step 2/4. It participates in amino-acid biosynthesis; L-valine biosynthesis; L-valine from pyruvate: step 2/4. Functionally, involved in the biosynthesis of branched-chain amino acids (BCAA). Catalyzes an alkyl-migration followed by a ketol-acid reduction of (S)-2-acetolactate (S2AL) to yield (R)-2,3-dihydroxy-isovalerate. In the isomerase reaction, S2AL is rearranged via a Mg-dependent methyl migration to produce 3-hydroxy-3-methyl-2-ketobutyrate (HMKB). In the reductase reaction, this 2-ketoacid undergoes a metal-dependent reduction by NADPH to yield (R)-2,3-dihydroxy-isovalerate. This Polynucleobacter asymbioticus (strain DSM 18221 / CIP 109841 / QLW-P1DMWA-1) (Polynucleobacter necessarius subsp. asymbioticus) protein is Ketol-acid reductoisomerase (NADP(+)).